Here is a 467-residue protein sequence, read N- to C-terminus: UBX domain-containing protein 7 (467 aa).

Position 2 is an N-acetylalanine (Ala-2). The UBA domain occupies Ala-2 to Gly-54. The interval Glu-57–Val-77 is disordered. Over residues Pro-59–Arg-70 the composition is skewed to polar residues. Glycyl lysine isopeptide (Lys-Gly) (interchain with G-Cter in SUMO2) cross-links involve residues Lys-84 and Lys-112. The disordered stretch occupies residues Gly-240 to Ile-260. A phosphoserine mark is found at Ser-256, Ser-258, Ser-263, and Ser-266. One copy of the ubiquitin-interacting motif (UIM) repeat lies at Ser-263 to Asp-282. Residues Phe-281–Ser-364 are disordered. Over residues His-330–Leu-344 the composition is skewed to basic and acidic residues. Ser-373 bears the Phosphoserine mark. A UBX domain is found at Val-386–Val-463.

As to quaternary structure, interacts with neddylated CUL2, ubiquitinated HIF1A, and VCP/p97.

It is found in the nucleus. Ubiquitin-binding adapter that links a subset of NEDD8-associated cullin ring ligases (CRLs) to the segregase VCP/p97, to regulate turnover of their ubiquitination substrates. This is UBX domain-containing protein 7 (Ubxn7) from Mus musculus (Mouse).